We begin with the raw amino-acid sequence, 1192 residues long: Probable phospholipid-transporting ATPase IM (1192 aa).

At 1-44 (MFCSEKKLREVERIVKANDREYNEKFQYADNRIHTSKYNILTFL) the chain is on the cytoplasmic side. A helical transmembrane segment spans residues 45–66 (PINLFEQFQRVANAYFLCLLIL). Residues 67–72 (QLIPEI) are Exoplasmic loop-facing. Residues 73–92 (SSLTWFTTIVPLVLVITMTA) traverse the membrane as a helical segment. Residues 93–276 (VKDATDDYFR…TSIDRLMNTL (184 aa)) are Cytoplasmic-facing. The helical transmembrane segment at 277-298 (VLWIFGFLICLGIILAIGNSIW) threads the bilayer. The Exoplasmic loop portion of the chain corresponds to 299–327 (ESQTGDQFRTFLFWNEGEKSSVFSGFLTF). The helical transmembrane segment at 328 to 349 (WSYIIILNTVVPISLYVSVEVI) threads the bilayer. Topologically, residues 350–871 (RLGHSYFINW…GRWSYFRMCK (522 aa)) are cytoplasmic. The 4-aspartylphosphate intermediate role is filled by Asp392. Residues Asp392, Lys393, Thr394, Glu496, Phe537, Lys560, Arg594, Thr674, Gly675, Asp676, Arg789, and Lys795 each contribute to the ATP site. Residue Asp392 participates in Mg(2+) binding. A Mg(2+)-binding site is contributed by Thr394. Asp815 contacts Mg(2+). Positions 818 and 819 each coordinate ATP. Asp819 is a Mg(2+) binding site. A helical membrane pass occupies residues 872 to 892 (FLCYFFYKNFAFTLVHFWFGF). Residues 893–904 (FCGFSAQTVYDQ) lie on the Exoplasmic loop side of the membrane. Residues 905 to 924 (WFITLFNIVYTSLPVLAMGI) traverse the membrane as a helical segment. At 925–954 (FDQDVSDQNSVDCPQLYKPGQLNLLFNKRK) the chain is on the cytoplasmic side. Residues 955–976 (FFICVLHGIYTSLVLFFIPYGA) traverse the membrane as a helical segment. The Exoplasmic loop segment spans residues 977-990 (FYNVAGEDGQHIAD). A helical membrane pass occupies residues 991 to 1013 (YQSFAVTMATSLVIVVSVQIALD). At 1014–1019 (TSYWTF) the chain is on the cytoplasmic side. A helical transmembrane segment spans residues 1020 to 1040 (INHVFIWGSIAIYFSILFTMH). Residues 1041 to 1060 (SNGIFGIFPNQFPFVGNARH) are Exoplasmic loop-facing. A helical transmembrane segment spans residues 1061–1085 (SLTQKCIWLVILLTTVASVMPVVAF). Over 1086–1192 (RFLKVDLYPT…SFSQDKTVKL (107 aa)) the chain is Cytoplasmic. Over residues 1104–1125 (QKAQKKARPPSSRRPRTRRSSS) the composition is skewed to basic residues. Disordered regions lie at residues 1104–1130 (QKAQKKARPPSSRRPRTRRSSSRRSGY) and 1143–1163 (TSGKNMRAKNPPPTSGLEKTH).

It belongs to the cation transport ATPase (P-type) (TC 3.A.3) family. Type IV subfamily. As to quaternary structure, component of a P4-ATPase flippase complex which consists of a catalytic alpha subunit and an accessory beta subunit. Interacts with beta subunits TMEM30A and TMEM30B. It depends on Mg(2+) as a cofactor. In terms of tissue distribution, ubiquitously expressed at moderate levels.

It localises to the cell membrane. The protein localises to the golgi apparatus. It catalyses the reaction ATP + H2O + phospholipidSide 1 = ADP + phosphate + phospholipidSide 2.. Component of a P4-ATPase flippase complex which catalyzes the hydrolysis of ATP coupled to the transport of aminophospholipids from the outer to the inner leaflet of various membranes and ensures the maintenance of asymmetric distribution of phospholipids. Phospholipid translocation also seems to be implicated in vesicle formation and in uptake of lipid signaling molecules. The protein is Probable phospholipid-transporting ATPase IM (ATP8B4) of Homo sapiens (Human).